Consider the following 104-residue polypeptide: Large ribosomal subunit protein uL24 (104 aa).

Belongs to the universal ribosomal protein uL24 family. In terms of assembly, part of the 50S ribosomal subunit.

In terms of biological role, one of two assembly initiator proteins, it binds directly to the 5'-end of the 23S rRNA, where it nucleates assembly of the 50S subunit. One of the proteins that surrounds the polypeptide exit tunnel on the outside of the subunit. The sequence is that of Large ribosomal subunit protein uL24 from Shewanella pealeana (strain ATCC 700345 / ANG-SQ1).